Reading from the N-terminus, the 379-residue chain is MFMNCRRVKKWHFLQLLSMCCVMSVLMVCWEHVDHHVVSHVKSYSYRYLINSYDFINKSLSVSPEEAARFGSFPYLLDRRDVCKNKDVLLLLFVKSSPGNFKRRQAIRSTWGNESYISQELGVVVKVVFAMGVRPDRSGHKTMQRELRKEHMAHHDLIQQDFLDTFHNLTVKLLLQFRWTHENCAHAHFLMSADDDVFIHVPNLVHYLQELKSQNVRNLWVGHVHRGAPPVRKRDSKYYMPFDMYQWSSYPDYTAGAGYVVSGDVAAKIYQATQSLNASMYIDDVFMGICAIAAGVSPQEHVYFSGEGKTPYHPCIYEKMITSHGHEGDIRYLWKAATGPQVEGISSGLLGKLYCAAVKMTLLCKPYFTNTYSCMAAFT.

Residues 1–12 (MFMNCRRVKKWH) are Cytoplasmic-facing. Residues 13–30 (FLQLLSMCCVMSVLMVCW) form a helical; Signal-anchor for type II membrane protein membrane-spanning segment. The Lumenal segment spans residues 31-379 (EHVDHHVVSH…NTYSCMAAFT (349 aa)). N-linked (GlcNAc...) asparagine glycans are attached at residues Asn57, Asn113, Asn168, and Asn277.

The protein belongs to the glycosyltransferase 31 family.

Its subcellular location is the golgi apparatus membrane. It carries out the reaction a beta-D-Gal-(1-&gt;4)-beta-D-Glc-(1&lt;-&gt;1)-Cer(d18:1(4E)) + UDP-N-acetyl-alpha-D-glucosamine = a beta-D-GlcNAc-(1-&gt;3)-beta-D-Gal-(1-&gt;4)-beta-D-Glc-(1&lt;-&gt;1)-Cer(d18:1(4E)) + UDP + H(+). The catalysed reaction is a neolactoside nLc4Cer(d18:1(4E)) + UDP-N-acetyl-alpha-D-glucosamine = a neolactoside IV(3)-beta-GlcNAc-nLc4Cer(d18:1(4E)) + UDP + H(+). The protein operates within protein modification; protein glycosylation. In terms of biological role, beta-1,3-N-acetylglucosaminyltransferase that plays a key role in the synthesis of lacto- or neolacto-series carbohydrate chains on glycolipids. The protein is Lactosylceramide 1,3-N-acetyl-beta-D-glucosaminyltransferase A (b3gnt5a) of Danio rerio (Zebrafish).